The chain runs to 448 residues: Deoxyguanosinetriphosphate triphosphohydrolase-like protein (448 aa).

The HD domain occupies 67–260; sequence RLTHSLEVSQ…MELADDIAYG (194 aa).

Belongs to the dGTPase family. Type 2 subfamily.

In Aliivibrio fischeri (strain MJ11) (Vibrio fischeri), this protein is Deoxyguanosinetriphosphate triphosphohydrolase-like protein.